Reading from the N-terminus, the 771-residue chain is Myotubularin-related protein 10 (771 aa).

In terms of domain architecture, Myotubularin phosphatase spans 217 to 657; that stretch reads FETYSDWDRE…THIKLWKLCY (441 aa). Phosphoserine is present on residues S603 and S745.

The protein belongs to the protein-tyrosine phosphatase family. Non-receptor class myotubularin subfamily.

This chain is Myotubularin-related protein 10 (Mtmr10), found in Mus musculus (Mouse).